The chain runs to 71 residues: General transcription factor IIH subunit 5 (71 aa).

Threonine 69 is modified (phosphothreonine).

The protein belongs to the TFB5 family. As to quaternary structure, component of the 7-subunit TFIIH core complex composed of XPB/ERCC3, XPD/ERCC2, GTF2H1, GTF2H2, GTF2H3, GTF2H4 and GTF2H5, which is active in NER. The core complex associates with the 3-subunit CDK-activating kinase (CAK) module composed of CCNH/cyclin H, CDK7 and MNAT1 to form the 10-subunit holoenzyme (holo-TFIIH) active in transcription. Part of TBP-based Pol II pre-initiation complex (PIC), in which Pol II core assembles with general transcription factors and other specific initiation factors including GTF2E1, GTF2E2, GTF2F1, GTF2F2, TCEA1, ERCC2, ERCC3, GTF2H2, GTF2H3, GTF2H4, GTF2H5, GTF2A1, GTF2A2, GTF2B and TBP; this large multi-subunit PIC complex mediates DNA unwinding and targets Pol II core to the transcription start site where the first phosphodiester bond forms.

It is found in the nucleus. It localises to the cytoplasm. In terms of biological role, component of the general transcription and DNA repair factor IIH (TFIIH) core complex, which is involved in general and transcription-coupled nucleotide excision repair (NER) of damaged DNA and, when complexed to CAK, in RNA transcription by RNA polymerase II. In NER, TFIIH acts by opening DNA around the lesion to allow the excision of the damaged oligonucleotide and its replacement by a new DNA fragment. In transcription, TFIIH has an essential role in transcription initiation. When the pre-initiation complex (PIC) has been established, TFIIH is required for promoter opening and promoter escape. Phosphorylation of the C-terminal tail (CTD) of the largest subunit of RNA polymerase II by the kinase module CAK controls the initiation of transcription. Necessary for the stability of the TFIIH complex and for the presence of normal levels of TFIIH in the cell. The sequence is that of General transcription factor IIH subunit 5 from Mus musculus (Mouse).